A 349-amino-acid polypeptide reads, in one-letter code: Guanine nucleotide-binding protein-like alpha-10 subunit (349 aa).

The region spanning 33-349 is the G-alpha domain; that stretch reads EEIRVLIYGQ…LNITYNSVKN (317 aa). A G1 motif region spans residues 36–49; it reads RVLIYGQKKVGVTT. The interval 168 to 176 is G2 motif; that stretch reads DLNFIKLTQ. Positions 191 to 200 are G3 motif; that stretch reads IKMIEMGIQT. GTP-binding positions include 195–199 and 266–269; these read EMGIQ and NKKD. The interval 262–269 is G4 motif; the sequence is IVFFNKKD. Positions 320-325 are G5 motif; sequence NEESEV.

Belongs to the G-alpha family.

The chain is Guanine nucleotide-binding protein-like alpha-10 subunit (gpaJ) from Dictyostelium discoideum (Social amoeba).